An 869-amino-acid polypeptide reads, in one-letter code: Rho GTPase-activating protein 27 (869 aa).

The 64-residue stretch at 6–69 folds into the SH3 domain; that stretch reads EGDVYVLVEH…PAQYVRELPA (64 aa). Ala28 is subject to Phosphotyrosine. The interval 104-134 is disordered; that stretch reads GADGSSAEPRGRASSLCGPARQRTGGQRNSL. A phosphoserine mark is found at Ser155, Ser215, and Ser249. 2 disordered regions span residues 208–300 and 331–401; these read RCPP…SGES and ETEE…GWSC. Residues 209 to 220 are compositionally biased toward basic and acidic residues; that stretch reads CPPRAESPKQVD. A compositionally biased stretch (low complexity) spans 235–250; the sequence is RATSPRSAAAPPRLSP. Residues 246–280 enclose the WW 1 domain; it reads PRLSPVWETHTDTGTGRPYYYNPDTGVTTWESPFE. Polar residues predominate over residues 283-294; sequence EGTTSPATSRAS. Residues 299-333 form the WW 2 domain; the sequence is ESLETEWGQYWDEESRRVFFYNPLTGETAWEDETE. The segment covering 345 to 356 has biased composition (polar residues); it reads MQPSLSPRSPGQ. The residue at position 350 (Ser350) is a Phosphoserine. The WW 3 domain occupies 414-447; it reads QFTQEQWVRLEDQHGKPYFYNPEDSSVQWELPQV. Disordered regions lie at residues 449 to 477 and 623 to 642; these read IPAPRSVRKSSQDSDTPAQASPPEEKIKT and EEDVRQNAASPSLSPGGLES. Ser459 and Ser462 each carry phosphoserine. At Thr464 the chain carries Phosphothreonine. The residue at position 469 (Ser469) is a Phosphoserine. A PH domain is found at 477–593; that stretch reads TLDKAGVLHR…WHKAIAEGIS (117 aa). Ser632 and Ser636 each carry phosphoserine. A Rho-GAP domain is found at 677–866; sequence CALAQLCERE…LILHQCADIF (190 aa).

Interacts with SH3KBP1/CIN85. Widely expressed. Highly expressed in kidney, lung, small intestine and thymus.

It is found in the cytoplasm. Its subcellular location is the membrane. Functionally, rho GTPase-activating protein which may be involved in clathrin-mediated endocytosis. GTPase activators for the Rho-type GTPases act by converting them to an inactive GDP-bound state. Has activity toward CDC42 and RAC1. The protein is Rho GTPase-activating protein 27 (Arhgap27) of Mus musculus (Mouse).